A 556-amino-acid polypeptide reads, in one-letter code: 2-isopropylmalate synthase (556 aa).

The Pyruvate carboxyltransferase domain occupies 33–307 (PIWLSTDLRD…DPQLDFSDID (275 aa)). Mg(2+)-binding residues include D42, H246, H248, and N282. Residues 439–556 (ASAPYALKGH…ALSQAESRAA (118 aa)) form a regulatory domain region.

This sequence belongs to the alpha-IPM synthase/homocitrate synthase family. LeuA type 2 subfamily. Homodimer. Requires Mg(2+) as cofactor.

It is found in the cytoplasm. It catalyses the reaction 3-methyl-2-oxobutanoate + acetyl-CoA + H2O = (2S)-2-isopropylmalate + CoA + H(+). Its pathway is amino-acid biosynthesis; L-leucine biosynthesis; L-leucine from 3-methyl-2-oxobutanoate: step 1/4. In terms of biological role, catalyzes the condensation of the acetyl group of acetyl-CoA with 3-methyl-2-oxobutanoate (2-ketoisovalerate) to form 3-carboxy-3-hydroxy-4-methylpentanoate (2-isopropylmalate). In Ectopseudomonas mendocina (strain ymp) (Pseudomonas mendocina), this protein is 2-isopropylmalate synthase.